The chain runs to 130 residues: KVWERCALARKLKELGMDGYRGVSLANWMCLTKWESDYNTDATNYNPSSESTDYGIFQINSRYWCNNGKTPHAVNGCGINCNVLLEDDITKAVQCAKRVVRDPQGVRAWVAWKNHCEGHDVEQYVEGCDL.

In terms of domain architecture, C-type lysozyme spans 1–130 (KVWERCALAR…VEQYVEGCDL (130 aa)). 4 disulfide bridges follow: C6–C128, C30–C116, C65–C81, and C77–C95. Residues E35 and D53 contribute to the active site.

The protein belongs to the glycosyl hydrolase 22 family. Monomer.

The catalysed reaction is Hydrolysis of (1-&gt;4)-beta-linkages between N-acetylmuramic acid and N-acetyl-D-glucosamine residues in a peptidoglycan and between N-acetyl-D-glucosamine residues in chitodextrins.. Functionally, lysozymes have primarily a bacteriolytic function; those in tissues and body fluids are associated with the monocyte-macrophage system and enhance the activity of immunoagents. The chain is Lysozyme C (LYZ) from Camelus dromedarius (Dromedary).